The following is a 283-amino-acid chain: Octanoyl-[GcvH]:protein N-octanoyltransferase (283 aa).

Residues 42–248 (GQSDAVVRTW…TLQSFGGELY (207 aa)) form the BPL/LPL catalytic domain. Residue Cys147 is the Acyl-thioester intermediate of the active site.

Belongs to the octanoyltransferase LipL family.

It catalyses the reaction N(6)-octanoyl-L-lysyl-[glycine-cleavage complex H protein] + L-lysyl-[lipoyl-carrier protein] = N(6)-octanoyl-L-lysyl-[lipoyl-carrier protein] + L-lysyl-[glycine-cleavage complex H protein]. Its pathway is protein modification; protein lipoylation via endogenous pathway; protein N(6)-(lipoyl)lysine from octanoyl-[acyl-carrier-protein]. Catalyzes the amidotransfer (transamidation) of the octanoyl moiety from octanoyl-GcvH to the lipoyl domain of the E2 subunit of lipoate-dependent enzymes. The protein is Octanoyl-[GcvH]:protein N-octanoyltransferase of Geobacillus kaustophilus (strain HTA426).